We begin with the raw amino-acid sequence, 262 residues long: Expansin-A13 (262 aa).

A signal peptide spans 1–22; the sequence is MAGVARMLAAVVCAIMPAAAMA. An Expansin-like EG45 domain is found at 52-167; that stretch reads GGACGYGNLY…QRVPCMKKGG (116 aa). The 81-residue stretch at 177-257 folds into the Expansin-like CBD domain; the sequence is YFQLVLLTNV…GWRFGQTFAS (81 aa).

Belongs to the expansin family. Expansin A subfamily. Expressed in roots and flowers.

The protein localises to the secreted. It localises to the cell wall. It is found in the membrane. Functionally, may cause loosening and extension of plant cell walls by disrupting non-covalent bonding between cellulose microfibrils and matrix glucans. No enzymatic activity has been found. May be required for rapid internodal elongation in deepwater rice during submergence. This chain is Expansin-A13 (EXPA13), found in Oryza sativa subsp. japonica (Rice).